Reading from the N-terminus, the 138-residue chain is MANLPDKDKLLRNFSRCGNWEEKYLYIIELGGQLPPLSAEMRTPDNRIAGCQSQVWIVLSTQADGSVQLYGDSDAAIVKGLIAMVFILYQGLTLAEIVAYDVRPFFDALALTQHLTPSRSQGLEAMVRGIRAQVAARQ.

C51 (cysteine persulfide intermediate) is an active-site residue.

This sequence belongs to the SufE family. As to quaternary structure, homodimer. Interacts with SufS.

It localises to the cytoplasm. The protein operates within cofactor biosynthesis; iron-sulfur cluster biosynthesis. Participates in cysteine desulfuration mediated by SufS. Cysteine desulfuration mobilizes sulfur from L-cysteine to yield L-alanine and constitutes an essential step in sulfur metabolism for biosynthesis of a variety of sulfur-containing biomolecules. Functions as a sulfur acceptor for SufS, by mediating the direct transfer of the sulfur atom from the S-sulfanylcysteine of SufS, an intermediate product of cysteine desulfuration process. This chain is Cysteine desulfuration protein SufE, found in Sodalis glossinidius (strain morsitans).